A 430-amino-acid polypeptide reads, in one-letter code: Glutamate-1-semialdehyde 2,1-aminomutase (430 aa).

Lysine 265 carries the post-translational modification N6-(pyridoxal phosphate)lysine.

Belongs to the class-III pyridoxal-phosphate-dependent aminotransferase family. HemL subfamily. Homodimer. The cofactor is pyridoxal 5'-phosphate.

The protein resides in the cytoplasm. The enzyme catalyses (S)-4-amino-5-oxopentanoate = 5-aminolevulinate. It functions in the pathway porphyrin-containing compound metabolism; protoporphyrin-IX biosynthesis; 5-aminolevulinate from L-glutamyl-tRNA(Glu): step 2/2. In Shewanella sp. (strain MR-7), this protein is Glutamate-1-semialdehyde 2,1-aminomutase.